A 438-amino-acid chain; its full sequence is MPKIVVVGAVAGGATCASQIRRLDKESDIIIFEKDRDMSFANCALPYVIGEVVEDRKYALAYTPEKFYDRKQITVKTYHEVIAINDERQTVSVLNRKTNEQFEESYDKLILSPGASANSLGFESDITFTLRNLEDTDAIDQFIKANQVDKVLVVGAGYVSLEVLENLYERGLHPTLIHRSDKINKLMDADMNQPILDELDKREIPYRLNEEIDAINGNEITFKSGKVEHYDMIIEGVGTHPNSKFIESSNIKLDRKGFIPVNDKFETNVPNIYVIGDIATSHYRHVDLPASVPLAWGAHRAASIVAEQIAGNDTIEFKGFLGNNIVKFFDYTFASVGVKPNELKQFDYKMVEVTQGAHANYYPGNSPLHLRVYYDTSNRQILRAAAVGKEGADKRIDVLSMAMMNQLTVDELTEFEVAYAPPYSHPKDLINMIGYKAK.

Residue Gly8–Glu33 coordinates FAD. Substrate is bound by residues Thr15, Gln19, Arg22, Ser39, and Asn42. The active-site Nucleophile is Cys43. Residue Cys43 is the Redox-active of the active site. Substrate is bound at residue Lys71. Residue Val151–Asn166 participates in NADP(+) binding. An FAD-binding site is contributed by Thr267 to Asp277. His299 is a binding site for substrate. Tyr419 is an FAD binding site. Lys427 provides a ligand contact to substrate.

The protein belongs to the class-III pyridine nucleotide-disulfide oxidoreductase family. As to quaternary structure, homodimer. Requires FAD as cofactor.

It catalyses the reaction NADP(+) + 2 CoA = CoA-disulfide + NADPH + H(+). Functionally, catalyzes specifically the NADPH-dependent reduction of coenzyme A disulfide. The chain is Coenzyme A disulfide reductase from Staphylococcus aureus (strain MRSA252).